The primary structure comprises 342 residues: tRNA N6-adenosine threonylcarbamoyltransferase (342 aa).

Residues His111 and His115 each coordinate Fe cation. Substrate contacts are provided by residues 133 to 137, Asp166, Gly179, Asp183, and Asn272; that span reads AVSGG. Fe cation is bound at residue Asp300.

Belongs to the KAE1 / TsaD family. Fe(2+) serves as cofactor.

It localises to the cytoplasm. The enzyme catalyses L-threonylcarbamoyladenylate + adenosine(37) in tRNA = N(6)-L-threonylcarbamoyladenosine(37) in tRNA + AMP + H(+). Required for the formation of a threonylcarbamoyl group on adenosine at position 37 (t(6)A37) in tRNAs that read codons beginning with adenine. Is involved in the transfer of the threonylcarbamoyl moiety of threonylcarbamoyl-AMP (TC-AMP) to the N6 group of A37, together with TsaE and TsaB. TsaD likely plays a direct catalytic role in this reaction. This Geobacter sp. (strain M21) protein is tRNA N6-adenosine threonylcarbamoyltransferase.